The primary structure comprises 1295 residues: DNA (cytosine-5)-methyltransferase CMT2 (1295 aa).

3 disordered regions span residues 1–23 (MLSPAKCESEEAQAPLDLHSSSR), 61–91 (RRSTTLNCNSPEENGGEGRVSQRKSSRGKSQ), and 249–287 (NSSKQSLGSNKRMRRSQRFMKGTENEGEENLGKSKGKGM). The span at 61 to 72 (RRSTTLNCNSPE) shows a compositional bias: polar residues. The BAH domain occupies 578–693 (HTFSLGDFAY…VEYSTFQTLR (116 aa)). The region spanning 727-1268 (LPVLDLYSGC…YSLGMAFRGL (542 aa)) is the SAM-dependent MTase C5-type domain. The tract at residues 814 to 835 (SVNSTKETSGSSSSSDDDSDSE) is disordered. Residues 837–902 (YEVEKLVDIC…SGFKSKILPL (66 aa)) enclose the Chromo domain. The active site involves Cys-915.

It belongs to the class I-like SAM-binding methyltransferase superfamily. C5-methyltransferase family.

The protein localises to the nucleus. It carries out the reaction a 2'-deoxycytidine in DNA + S-adenosyl-L-methionine = a 5-methyl-2'-deoxycytidine in DNA + S-adenosyl-L-homocysteine + H(+). In terms of biological role, may be involved in the CpXpG methylation and in gene silencing. The protein is DNA (cytosine-5)-methyltransferase CMT2 (CMT2) of Arabidopsis thaliana (Mouse-ear cress).